Consider the following 554-residue polypeptide: Solute carrier family 22 member 2 (554 aa).

The Cytoplasmic segment spans residues 1–21; it reads MPTVDDILEQVGHFHFFQKQT. Residues 22–42 traverse the membrane as a helical segment; that stretch reads FFLLALISAAFTPIYVGIVFL. Over 43 to 149 the chain is Extracellular; sequence GFTPDHRCRS…LVCARSWMLD (107 aa). N71 carries an N-linked (GlcNAc...) asparagine glycan. A helical membrane pass occupies residues 150–170; the sequence is LFQSAVNIGFFIGSVGIGYLA. Topologically, residues 171-176 are cytoplasmic; that stretch reads DRFGRK. Residues 177 to 197 form a helical membrane-spanning segment; sequence LCLLVTILINAAAGVLMAVSP. Residue N198 is glycosylated (N-linked (GlcNAc...) asparagine). Topologically, residues 198–209 are extracellular; that stretch reads NYTWMLIFRLIQ. A helical transmembrane segment spans residues 210–230; it reads GLVSKAGWLIGYILITEFVGL. Over 231 to 237 the chain is Cytoplasmic; it reads NYRRTVG. Residues 238-258 form a helical membrane-spanning segment; it reads ILYQVAFTVGLLVLAGVAYAL. Topologically, residues 259 to 262 are extracellular; the sequence is PRWR. A helical transmembrane segment spans residues 263-283; it reads WLQLTVTLPYFCFLLYYWCIP. Positions 283–287 match the Proline-rich sequence motif; that stretch reads PESPR. Residues 284 to 348 are Cytoplasmic-facing; the sequence is ESPRWLISQN…RTPQIRKHTC (65 aa). A helical transmembrane segment spans residues 349–369; the sequence is ILMYNWFTSSVLYQGLIMHLG. Topologically, residues 370–374 are extracellular; the sequence is LAGGD. A helical membrane pass occupies residues 375–395; sequence IYLDFFYSALVEFPAAFLIIA. The Cytoplasmic segment spans residues 396–403; it reads TIDRVGRR. A helical membrane pass occupies residues 404 to 424; that stretch reads YPWAVSNMVAGAACLASVFVP. The Extracellular portion of the chain corresponds to 425 to 427; that stretch reads DDL. A helical membrane pass occupies residues 428–450; the sequence is QGLRITVACLGRMGITMAYEMVC. Topologically, residues 451-463 are cytoplasmic; it reads LVNAELYPTFIRN. The helical transmembrane segment at 464–484 threads the bilayer; that stretch reads LGVLVCSSLCDVGGIVTPFLV. Residues 485–493 are Extracellular-facing; the sequence is YRLTAIWLQ. Residues 494-514 form a helical membrane-spanning segment; sequence LPLVVFAVVGLVAGGLVLMLP. Residues 515-554 are Cytoplasmic-facing; that stretch reads ETKGRTLPETIEEAENLQRPRKNREKVIYVHVRKADGPLT.

It belongs to the major facilitator (TC 2.A.1) superfamily. Organic cation transporter (TC 2.A.1.19) family. Post-translationally, tyrosine phosphorylated. In terms of tissue distribution, expressed in kidney.

The protein localises to the basolateral cell membrane. It localises to the basal cell membrane. The catalysed reaction is (R)-noradrenaline(out) = (R)-noradrenaline(in). It carries out the reaction (R)-adrenaline(out) = (R)-adrenaline(in). It catalyses the reaction serotonin(out) = serotonin(in). The enzyme catalyses dopamine(out) = dopamine(in). The catalysed reaction is histamine(out) = histamine(in). It carries out the reaction thiamine(in) = thiamine(out). It catalyses the reaction creatinine(in) = creatinine(out). The enzyme catalyses 1-methylnicotinamide(out) = 1-methylnicotinamide(in). The catalysed reaction is guanidine(out) = guanidine(in). It carries out the reaction choline(out) = choline(in). It catalyses the reaction agmatine(out) = agmatine(in). The enzyme catalyses putrescine(out) = putrescine(in). The catalysed reaction is spermidine(in) = spermidine(out). It carries out the reaction tyramine(in) = tyramine(out). It catalyses the reaction L-histidyl-L-proline diketopiperazine(in) = L-histidyl-L-proline diketopiperazine(out). The enzyme catalyses (R)-salsolinol(in) = (R)-salsolinol(out). The catalysed reaction is N-methyl-(R)-salsolinol(in) = N-methyl-(R)-salsolinol(out). It carries out the reaction acetylcholine(in) = acetylcholine(out). It catalyses the reaction prostaglandin F2alpha(out) = prostaglandin F2alpha(in). The enzyme catalyses prostaglandin E2(out) = prostaglandin E2(in). Its activity is regulated as follows. Tyrosine phosphorylation of the transporter leads to activation of the transport activity. Inhibited by cGMP, most likely through a cGMP-binding protein that interacts with OCT2. Functionally, electrogenic voltage-dependent transporter that mediates the transport of a variety of organic cations such as endogenous bioactive amines, cationic drugs and xenobiotics. Functions as a Na(+)-independent, bidirectional uniporter. Cation cellular uptake or release is driven by the electrochemical potential, i.e. membrane potential and concentration gradient. However, may also engage electroneutral cation exchange when saturating concentrations of cation substrates are reached. Predominantly expressed at the basolateral membrane of hepatocytes and proximal tubules and involved in the uptake and disposition of cationic compounds by hepatic and renal clearance from the blood flow. Implicated in monoamine neurotransmitters uptake such as histamine, dopamine, adrenaline/epinephrine, noradrenaline/norepinephrine, serotonin and tyramine, thereby supporting a physiological role in the central nervous system by regulating interstitial concentrations of neurotransmitters. Also capable of transporting dopaminergic neuromodulators cyclo(his-pro), salsolinol and N-methyl-salsolinol, thereby involved in the maintenance of dopaminergic cell integrity in the central nervous system. Mediates the bidirectional transport of acetylcholine (ACh) at the apical membrane of ciliated cell in airway epithelium, thereby playing a role in luminal release of ACh from bronchial epithelium. Also transports guanidine and endogenous monoamines such as vitamin B1/thiamine, creatinine and N-1-methylnicotinamide (NMN). Mediates the uptake and efflux of quaternary ammonium compound choline. Mediates the bidirectional transport of polyamine agmatine and the uptake of polyamines putrescine and spermidine. Able to transport non-amine endogenous compounds such as prostaglandin E2 (PGE2) and prostaglandin F2-alpha (PGF2-alpha). Also involved in the uptake of xenobiotic 4-(4-(dimethylamino)styryl)-N-methylpyridinium (ASP). May contribute to regulate the transport of organic compounds in testis across the blood-testis-barrier. This is Solute carrier family 22 member 2 (SLC22A2) from Oryctolagus cuniculus (Rabbit).